The sequence spans 167 residues: Ribosome maturation factor RimM (167 aa).

One can recognise a PRC barrel domain in the interval 94–165 (ENEFYYSDII…KIIITPMEGL (72 aa)).

The protein belongs to the RimM family. Binds ribosomal protein uS19.

The protein localises to the cytoplasm. Its function is as follows. An accessory protein needed during the final step in the assembly of 30S ribosomal subunit, possibly for assembly of the head region. Essential for efficient processing of 16S rRNA. May be needed both before and after RbfA during the maturation of 16S rRNA. It has affinity for free ribosomal 30S subunits but not for 70S ribosomes. The chain is Ribosome maturation factor RimM from Staphylococcus aureus (strain Mu3 / ATCC 700698).